We begin with the raw amino-acid sequence, 355 residues long: Holliday junction branch migration complex subunit RuvB (355 aa).

Residues 1–193 form a large ATPase domain (RuvB-L) region; that stretch reads MGRFSEDSAD…FGFTAHMDFY (193 aa). ATP is bound by residues Leu-32, Arg-33, Gly-74, Lys-77, Thr-78, Ser-79, 140–142, Arg-183, Tyr-193, and Arg-230; that span reads EDF. Residue Thr-78 participates in Mg(2+) binding. The interval 194–264 is small ATPAse domain (RuvB-S); that stretch reads EPSELERVLA…IAKYALEVYD (71 aa). The head domain (RuvB-H) stretch occupies residues 267 to 355; sequence ELGLDRLDRA…VGLGQTGLFD (89 aa). 2 residues coordinate DNA: Arg-322 and Arg-327.

This sequence belongs to the RuvB family. In terms of assembly, homohexamer. Forms an RuvA(8)-RuvB(12)-Holliday junction (HJ) complex. HJ DNA is sandwiched between 2 RuvA tetramers; dsDNA enters through RuvA and exits via RuvB. An RuvB hexamer assembles on each DNA strand where it exits the tetramer. Each RuvB hexamer is contacted by two RuvA subunits (via domain III) on 2 adjacent RuvB subunits; this complex drives branch migration. In the full resolvosome a probable DNA-RuvA(4)-RuvB(12)-RuvC(2) complex forms which resolves the HJ.

It localises to the cytoplasm. It catalyses the reaction ATP + H2O = ADP + phosphate + H(+). Its function is as follows. The RuvA-RuvB-RuvC complex processes Holliday junction (HJ) DNA during genetic recombination and DNA repair, while the RuvA-RuvB complex plays an important role in the rescue of blocked DNA replication forks via replication fork reversal (RFR). RuvA specifically binds to HJ cruciform DNA, conferring on it an open structure. The RuvB hexamer acts as an ATP-dependent pump, pulling dsDNA into and through the RuvAB complex. RuvB forms 2 homohexamers on either side of HJ DNA bound by 1 or 2 RuvA tetramers; 4 subunits per hexamer contact DNA at a time. Coordinated motions by a converter formed by DNA-disengaged RuvB subunits stimulates ATP hydrolysis and nucleotide exchange. Immobilization of the converter enables RuvB to convert the ATP-contained energy into a lever motion, pulling 2 nucleotides of DNA out of the RuvA tetramer per ATP hydrolyzed, thus driving DNA branch migration. The RuvB motors rotate together with the DNA substrate, which together with the progressing nucleotide cycle form the mechanistic basis for DNA recombination by continuous HJ branch migration. Branch migration allows RuvC to scan DNA until it finds its consensus sequence, where it cleaves and resolves cruciform DNA. The chain is Holliday junction branch migration complex subunit RuvB from Mycolicibacterium vanbaalenii (strain DSM 7251 / JCM 13017 / BCRC 16820 / KCTC 9966 / NRRL B-24157 / PYR-1) (Mycobacterium vanbaalenii).